Consider the following 951-residue polypeptide: Valine--tRNA ligase (951 aa).

A 'HIGH' region motif is present at residues P42–H52. Residues K554–S558 carry the 'KMSKS' region motif. K557 lines the ATP pocket. Residues L882–Q944 adopt a coiled-coil conformation.

This sequence belongs to the class-I aminoacyl-tRNA synthetase family. ValS type 1 subfamily. In terms of assembly, monomer.

It localises to the cytoplasm. The enzyme catalyses tRNA(Val) + L-valine + ATP = L-valyl-tRNA(Val) + AMP + diphosphate. In terms of biological role, catalyzes the attachment of valine to tRNA(Val). As ValRS can inadvertently accommodate and process structurally similar amino acids such as threonine, to avoid such errors, it has a 'posttransfer' editing activity that hydrolyzes mischarged Thr-tRNA(Val) in a tRNA-dependent manner. The chain is Valine--tRNA ligase from Salmonella choleraesuis (strain SC-B67).